A 224-amino-acid polypeptide reads, in one-letter code: Ankyrin repeat domain-containing protein 45 (224 aa).

ANK repeat units lie at residues 46 to 76 and 80 to 109; these read VGRN…DVNE and RGYS…DFQA.

Widely expressed.

The protein localises to the cytoplasm. It localises to the midbody. Its subcellular location is the midbody ring. The protein resides in the cleavage furrow. Its function is as follows. May play a role during cell division. This Danio rerio (Zebrafish) protein is Ankyrin repeat domain-containing protein 45.